The primary structure comprises 229 residues: Enolase-phosphatase E1 (229 aa).

Belongs to the HAD-like hydrolase superfamily. MasA/MtnC family. Monomer. Mg(2+) is required as a cofactor.

It catalyses the reaction 5-methylsulfanyl-2,3-dioxopentyl phosphate + H2O = 1,2-dihydroxy-5-(methylsulfanyl)pent-1-en-3-one + phosphate. It functions in the pathway amino-acid biosynthesis; L-methionine biosynthesis via salvage pathway; L-methionine from S-methyl-5-thio-alpha-D-ribose 1-phosphate: step 3/6. It participates in amino-acid biosynthesis; L-methionine biosynthesis via salvage pathway; L-methionine from S-methyl-5-thio-alpha-D-ribose 1-phosphate: step 4/6. Its function is as follows. Bifunctional enzyme that catalyzes the enolization of 2,3-diketo-5-methylthiopentyl-1-phosphate (DK-MTP-1-P) into the intermediate 2-hydroxy-3-keto-5-methylthiopentenyl-1-phosphate (HK-MTPenyl-1-P), which is then dephosphorylated to form the acireductone 1,2-dihydroxy-3-keto-5-methylthiopentene (DHK-MTPene). The sequence is that of Enolase-phosphatase E1 from Yersinia pseudotuberculosis serotype O:1b (strain IP 31758).